Consider the following 629-residue polypeptide: Filament-like plant protein 2 (629 aa).

Coiled coils occupy residues 34-61 and 102-171; these read WEKAENEVVELKQKLEDAADKNIVLEDR and NTGL…LEAE. Positions 186 to 205 are disordered; the sequence is SSNQSVDSHSDGGRERVEGS. Over residues 193–203 the composition is skewed to basic and acidic residues; it reads SHSDGGRERVE. A coiled-coil region spans residues 270-493; it reads ELSLMEKLEK…IEEKTMIKRE (224 aa).

The protein belongs to the FPP family. In terms of assembly, interacts with WPP/MAF proteins. Binds to COG2; this interaction promotes the association between cortical microtubules and EXO70A1. In terms of tissue distribution, accumulates in preferentially xylem cells.

Its subcellular location is the vesicle. Its function is as follows. Ensures, when in complex with FPP3/VETH1 and COG2, the correct secondary cell wall (SCW) deposition pattern by recruiting exocyst components to cortical microtubules in xylem cells during secondary cell wall deposition by recruiting EXO70A1. This chain is Filament-like plant protein 2, found in Arabidopsis thaliana (Mouse-ear cress).